We begin with the raw amino-acid sequence, 67 residues long: MKAQNVRDLDEHELKTKLKEMDEQMFRLHFQMSMGQMDGLKKVRQMRKDRARMNTILRERELAGEKK.

The protein belongs to the universal ribosomal protein uL29 family.

This is Large ribosomal subunit protein uL29 from Solibacter usitatus (strain Ellin6076).